The following is a 497-amino-acid chain: Bloodstream-specific protein 2 (497 aa).

A signal peptide spans 1 to 14; the sequence is MRAIFLVALALATM. The 110-residue stretch at 15-124 folds into the Thioredoxin 1 domain; it reads RESTAESLKL…IIKYIKANVG (110 aa). Asn30 carries N-linked (GlcNAc...) asparagine glycosylation. An intrachain disulfide couples Cys48 to Cys51. Asn63, Asn85, Asn153, Asn154, Asn250, and Asn278 each carry an N-linked (GlcNAc...) asparagine glycan. The region spanning 334–455 is the Thioredoxin 2 domain; sequence EPTIKSLPVP…VYEFVRKHVT (122 aa). Catalysis depends on nucleophile residues Cys378 and Cys381. Cys378 and Cys381 are joined by a disulfide. N-linked (GlcNAc...) asparagine glycans are attached at residues Asn413, Asn465, Asn476, Asn482, Asn485, and Asn488. Residues 461–497 are disordered; the sequence is EKPANVTEEKKSEEENKSSKSNESNDSNESNVDKQDL. The segment covering 467-480 has biased composition (basic and acidic residues); the sequence is TEEKKSEEENKSSK. Residues 481 to 490 are compositionally biased toward low complexity; it reads SNESNDSNES.

Belongs to the protein disulfide isomerase family.

This is Bloodstream-specific protein 2 (BS2) from Trypanosoma brucei brucei.